The sequence spans 434 residues: Homogentisate 1,2-dioxygenase (434 aa).

His-289 serves as the catalytic Proton acceptor. His-332 and Glu-338 together coordinate Fe cation. Homogentisate-binding residues include Tyr-347 and His-368. Fe cation is bound at residue His-368.

Belongs to the homogentisate dioxygenase family. As to quaternary structure, hexamer; dimer of trimers. It depends on Fe cation as a cofactor.

The enzyme catalyses homogentisate + O2 = 4-maleylacetoacetate + H(+). Its pathway is amino-acid degradation; L-phenylalanine degradation; acetoacetate and fumarate from L-phenylalanine: step 4/6. Involved in the catabolism of homogentisate (2,5-dihydroxyphenylacetate or 2,5-OH-PhAc), a central intermediate in the degradation of phenylalanine and tyrosine. Catalyzes the oxidative ring cleavage of the aromatic ring of homogentisate to yield maleylacetoacetate. This chain is Homogentisate 1,2-dioxygenase, found in Pseudomonas fluorescens (strain ATCC BAA-477 / NRRL B-23932 / Pf-5).